Here is a 154-residue protein sequence, read N- to C-terminus: Myoglobin (154 aa).

Residues 2–148 (GLSDGEWQLV…FRKDIAAKYK (147 aa)) form the Globin domain. The residue at position 4 (Ser-4) is a Phosphoserine. His-65 serves as a coordination point for nitrite. His-65 contacts O2. Thr-68 is subject to Phosphothreonine. His-94 is a binding site for heme b.

The protein belongs to the globin family. In terms of assembly, monomeric.

The protein resides in the cytoplasm. The protein localises to the sarcoplasm. It carries out the reaction Fe(III)-heme b-[protein] + nitric oxide + H2O = Fe(II)-heme b-[protein] + nitrite + 2 H(+). The enzyme catalyses H2O2 + AH2 = A + 2 H2O. Monomeric heme protein which primary function is to store oxygen and facilitate its diffusion within muscle tissues. Reversibly binds oxygen through a pentacoordinated heme iron and enables its timely and efficient release as needed during periods of heightened demand. Depending on the oxidative conditions of tissues and cells, and in addition to its ability to bind oxygen, it also has a nitrite reductase activity whereby it regulates the production of bioactive nitric oxide. Under stress conditions, like hypoxia and anoxia, it also protects cells against reactive oxygen species thanks to its pseudoperoxidase activity. This Orcinus orca (Killer whale) protein is Myoglobin (MB).